A 311-amino-acid chain; its full sequence is Thioredoxin reductase (311 aa).

33–43 contributes to the FAD binding site; the sequence is EGFFSGISGGQ. Cysteine 138 and cysteine 141 are oxidised to a cystine. Residue 283-292 coordinates FAD; it reads DVQDKYYRQA.

The protein belongs to the class-II pyridine nucleotide-disulfide oxidoreductase family. As to quaternary structure, homodimer. FAD serves as cofactor.

The protein localises to the cytoplasm. It carries out the reaction [thioredoxin]-dithiol + NADP(+) = [thioredoxin]-disulfide + NADPH + H(+). In Chlamydia pneumoniae (Chlamydophila pneumoniae), this protein is Thioredoxin reductase (trxB).